The primary structure comprises 710 residues: ARM REPEAT PROTEIN INTERACTING WITH ABF2 (710 aa).

The disordered stretch occupies residues 1–35 (MDQQPERREGRSFPERKGQKRKLEEGAAAVEDREI). ARM repeat units lie at residues 85 to 127 (EDLV…EKGS), 138 to 185 (PEYQ…NLAH), 188 to 227 (SSIK…TLAF), 230 to 269 (DDNK…NLVH), 272 to 311 (PHIK…QFAS), 314 to 353 (SDCK…RLAQ), 355 to 394 (AHNQ…GLAD), 429 to 468 (LKRL…HLCS), and 470 to 509 (EDQR…KLAN). Residues 541–608 (SDVTFLVEGR…IYTGSVDITN (68 aa)) enclose the BTB domain.

Interacts with ABF2. Interacts with DUF7/AIP1. Detected in embryos and most of the vegetative and reproductive organs.

It localises to the nucleus. Its pathway is protein modification; protein ubiquitination. In terms of biological role, may act as a substrate-specific adapter of an E3 ubiquitin-protein ligase complex (CUL3-RBX1-BTB) which mediates the ubiquitination and subsequent proteasomal degradation of target proteins. Acts as a positive regulator of ABA response via the modulation of the transcriptional activity of ABF2, a transcription factor which controls ABA-dependent gene expression via the G-box-type ABA-responsive elements. Negative regulator of seed germination and young seedling growth. In Arabidopsis thaliana (Mouse-ear cress), this protein is ARM REPEAT PROTEIN INTERACTING WITH ABF2 (ARIA).